Reading from the N-terminus, the 1498-residue chain is Transposon Ty3-I Gag-Pol polyprotein (1498 aa).

The CCHC-type zinc finger occupies 265–282 (RLCFYCKKEGHRLNECRA). Catalysis depends on aspartate 336, which acts as the For protease activity; shared with dimeric partner. The disordered stretch occupies residues 470–490 (TDPKSAGNRGNPRNTKLSLAP). Positions 646–823 (LDNKFIVPSK…EETEFLGYSI (178 aa)) constitute a Reverse transcriptase domain. Mg(2+)-binding residues include aspartate 712, aspartate 774, and aspartate 775. Positions 919-1037 (DASKDGIGAV…VADAISRAIY (119 aa)) constitute an RNase H Ty3/gyspy-type domain. Positions 1132–1171 (HTLFGGHFGVTVTLAKISPIYYWPKLQHSIIQYIRTCVQC) are integrase-type zinc finger-like. Residues 1185-1350 (LQPLPIAEGR…SPFEIDLGYL (166 aa)) enclose the Integrase catalytic domain. Mg(2+)-binding residues include aspartate 1201 and aspartate 1262.

The protease is a homodimer, whose active site consists of two apposed aspartic acid residues. Post-translationally, initially, virus-like particles (VLPs) are composed of the structural unprocessed proteins Gag and Gag-Pol, and also contain the host initiator methionine tRNA (tRNA(i)-Met) which serves as a primer for minus-strand DNA synthesis, and a dimer of genomic Ty RNA. Processing of the polyproteins occurs within the particle and proceeds by an ordered pathway, called maturation. First, the protease (PR) is released by autocatalytic cleavage of the Gag-Pol polyprotein, and this cleavage is a prerequisite for subsequent processing at the remaining sites to release the mature structural and catalytic proteins. Maturation takes place prior to the RT reaction and is required to produce transposition-competent VLPs.

It is found in the cytoplasm. The protein resides in the nucleus. The enzyme catalyses DNA(n) + a 2'-deoxyribonucleoside 5'-triphosphate = DNA(n+1) + diphosphate. It carries out the reaction Endonucleolytic cleavage to 5'-phosphomonoester.. Capsid protein (CA) is the structural component of the virus-like particle (VLP), forming the shell that encapsulates the genomic RNA-nucleocapsid complex. Its function is as follows. Nucleocapsid protein p11 (NC) forms the nucleocore that coats the retro-elements dimeric RNA. Binds these RNAs through its zinc fingers. Promotes primer tRNA(i)-Met annealing to the multipartite primer-binding site (PBS), dimerization of Ty3 RNA and initiation of reverse transcription. Functionally, the aspartyl protease (PR) mediates the proteolytic cleavages of the Gag and Gag-Pol polyproteins after assembly of the VLP. In terms of biological role, reverse transcriptase/ribonuclease H (RT) is a multifunctional enzyme that catalyzes the conversion of the retro-elements RNA genome into dsDNA within the VLP. The enzyme displays a DNA polymerase activity that can copy either DNA or RNA templates, and a ribonuclease H (RNase H) activity that cleaves the RNA strand of RNA-DNA heteroduplexes during plus-strand synthesis and hydrolyzes RNA primers. The conversion leads to a linear dsDNA copy of the retrotransposon that includes long terminal repeats (LTRs) at both ends. Integrase (IN) targets the VLP to the nucleus, where a subparticle preintegration complex (PIC) containing at least integrase and the newly synthesized dsDNA copy of the retrotransposon must transit the nuclear membrane. Once in the nucleus, integrase performs the integration of the dsDNA into the host genome. The chain is Transposon Ty3-I Gag-Pol polyprotein (TY3B-I) from Saccharomyces cerevisiae (strain ATCC 204508 / S288c) (Baker's yeast).